Consider the following 243-residue polypeptide: tRNA (guanine-N(1)-)-methyltransferase (243 aa).

Residues glycine 110 and valine 130–methionine 135 each bind S-adenosyl-L-methionine.

The protein belongs to the RNA methyltransferase TrmD family. Homodimer.

The protein localises to the cytoplasm. The catalysed reaction is guanosine(37) in tRNA + S-adenosyl-L-methionine = N(1)-methylguanosine(37) in tRNA + S-adenosyl-L-homocysteine + H(+). Its function is as follows. Specifically methylates guanosine-37 in various tRNAs. The protein is tRNA (guanine-N(1)-)-methyltransferase of Treponema denticola (strain ATCC 35405 / DSM 14222 / CIP 103919 / JCM 8153 / KCTC 15104).